Reading from the N-terminus, the 457-residue chain is UDP-N-acetylmuramoylalanine--D-glutamate ligase (457 aa).

Residue 117-123 coordinates ATP; the sequence is GTNGKST.

It belongs to the MurCDEF family.

The protein localises to the cytoplasm. It carries out the reaction UDP-N-acetyl-alpha-D-muramoyl-L-alanine + D-glutamate + ATP = UDP-N-acetyl-alpha-D-muramoyl-L-alanyl-D-glutamate + ADP + phosphate + H(+). The protein operates within cell wall biogenesis; peptidoglycan biosynthesis. In terms of biological role, cell wall formation. Catalyzes the addition of glutamate to the nucleotide precursor UDP-N-acetylmuramoyl-L-alanine (UMA). The protein is UDP-N-acetylmuramoylalanine--D-glutamate ligase of Paramagnetospirillum magneticum (strain ATCC 700264 / AMB-1) (Magnetospirillum magneticum).